A 257-amino-acid polypeptide reads, in one-letter code: MKAHKIFWLNLAAIIIISIVVSGDMFLAMKWEQIHLKDGLKKVLSTYPIKNLETLYEIDGHDNPHYENNDQDTWYIESSYSVVGSDELLKEDRMLLKVDKNTHKITGEYDTTTNDKKNATDSTYKSYPVKVVNNKIVFTKDVKDPALKQKIENNQFLIQSGDLTSILNSNDLKVTHDPTTDYYNLSGKLSNDNPNVKQLKRRYNIPKNASTKVELKGMSDLKGNNHQDQKLYFYFSSPGKDQIIYKESLTYNKISEH.

Residues 6–26 (IFWLNLAAIIIISIVVSGDMF) traverse the membrane as a helical segment.

Belongs to the staphylococcal tandem lipoprotein family.

It localises to the cell membrane. This is an uncharacterized protein from Staphylococcus aureus (strain COL).